We begin with the raw amino-acid sequence, 457 residues long: MDHLPIFCQLRDRDCLIVGGGDVAERKARLLLDAGARLTVNALAFIPQFTAWADAGMLTLVEGPFDESLLDTCWLAIAATDDDALNQRVSEAAESRRIFCNVVDAPKAASFIMPSIIDRSPLMVAVSSGGTSPVLARLLREKLESLLPLHLGQVAKYAGQLRGRVKQQFATMGERRRFWEKLFVNDRLAQSLANNDQKAITETTEQLINEPLDHRGEVVLVGAGPGDAGLLTLKGLQQIQQADVVVYDRLVSDDIMNLVRRDADRVFVGKRAGYHCVPQEEINQILLREAQKGKRVVRLKGGDPFIFGRGGEELETLCNADIPFSVVPGITAASGCSAYSGIPLTHRDYAQSVRLITGHLKTGGELDWENLAAEKQTLVFYMGLNQASTIQQKLIEHGMPGEMPVAIVENGTAVTQRVIDGTLTQLGELAQQMNSPSLIIIGRVVGLRDKLNWFSNH.

A precorrin-2 dehydrogenase /sirohydrochlorin ferrochelatase region spans residues 1-204 (MDHLPIFCQL…NDQKAITETT (204 aa)). Residues 22–23 (DV) and 43–44 (LA) contribute to the NAD(+) site. Phosphoserine is present on Ser128. Residues 216–457 (GEVVLVGAGP…RDKLNWFSNH (242 aa)) are uroporphyrinogen-III C-methyltransferase. S-adenosyl-L-methionine is bound at residue Pro225. The Proton acceptor role is filled by Asp248. The active-site Proton donor is Lys270. Residues 301–303 (GGD), Ile306, 331–332 (TA), Met382, and Gly411 contribute to the S-adenosyl-L-methionine site.

This sequence in the N-terminal section; belongs to the precorrin-2 dehydrogenase / sirohydrochlorin ferrochelatase family. In the C-terminal section; belongs to the precorrin methyltransferase family.

The catalysed reaction is uroporphyrinogen III + 2 S-adenosyl-L-methionine = precorrin-2 + 2 S-adenosyl-L-homocysteine + H(+). It catalyses the reaction precorrin-2 + NAD(+) = sirohydrochlorin + NADH + 2 H(+). It carries out the reaction siroheme + 2 H(+) = sirohydrochlorin + Fe(2+). The protein operates within cofactor biosynthesis; adenosylcobalamin biosynthesis; precorrin-2 from uroporphyrinogen III: step 1/1. It functions in the pathway cofactor biosynthesis; adenosylcobalamin biosynthesis; sirohydrochlorin from precorrin-2: step 1/1. Its pathway is porphyrin-containing compound metabolism; siroheme biosynthesis; precorrin-2 from uroporphyrinogen III: step 1/1. It participates in porphyrin-containing compound metabolism; siroheme biosynthesis; siroheme from sirohydrochlorin: step 1/1. The protein operates within porphyrin-containing compound metabolism; siroheme biosynthesis; sirohydrochlorin from precorrin-2: step 1/1. In terms of biological role, multifunctional enzyme that catalyzes the SAM-dependent methylations of uroporphyrinogen III at position C-2 and C-7 to form precorrin-2 via precorrin-1. Then it catalyzes the NAD-dependent ring dehydrogenation of precorrin-2 to yield sirohydrochlorin. Finally, it catalyzes the ferrochelation of sirohydrochlorin to yield siroheme. The protein is Siroheme synthase of Escherichia fergusonii (strain ATCC 35469 / DSM 13698 / CCUG 18766 / IAM 14443 / JCM 21226 / LMG 7866 / NBRC 102419 / NCTC 12128 / CDC 0568-73).